A 315-amino-acid chain; its full sequence is Probable diguanylate cyclase DgcF (315 aa).

Helical transmembrane passes span 10-30 (FSTG…GVLP), 41-61 (IALI…SLAF), 80-100 (LLTF…VIDI), and 116-136 (LGIA…AAIN). Positions 173–310 (QHLTVMLLDI…GRNRTSTMRY (138 aa)) constitute a GGDEF domain. Asp181 and Ile182 together coordinate Mg(2+). The substrate site is built by Asn189, His194, and Asp198. Glu224 lines the Mg(2+) pocket.

Homodimer. The cofactor is Mg(2+).

The protein localises to the cell membrane. It carries out the reaction 2 GTP = 3',3'-c-di-GMP + 2 diphosphate. Its pathway is purine metabolism; 3',5'-cyclic di-GMP biosynthesis. Functionally, catalyzes the synthesis of cyclic-di-GMP (c-di-GMP) via the condensation of 2 GTP molecules. The polypeptide is Probable diguanylate cyclase DgcF (Escherichia coli (strain K12)).